A 113-amino-acid polypeptide reads, in one-letter code: Dolichyl-diphosphooligosaccharide--protein glycosyltransferase subunit DAD1 (113 aa).

Ser2 is subject to N-acetylserine. At 2–30 (SASVLSVISRFLEEYLSSTPQRLKLLDAY) the chain is on the cytoplasmic side. Residues 31–51 (LLYILLTGALQFGYCLLVGTF) form a helical membrane-spanning segment. Residue Pro52 is a topological domain, lumenal. Residues 53–73 (FNSFLSGFISCVGSFILAVCL) traverse the membrane as a helical segment. The Cytoplasmic segment spans residues 74 to 92 (RIQINPQNKADFQGISPER). Residues 93–113 (AFADFLFASTILHLVVMNFVG) form a helical membrane-spanning segment.

It belongs to the DAD/OST2 family. In terms of assembly, component of the oligosaccharyltransferase (OST) complex. OST exists in two different complex forms which contain common core subunits RPN1, RPN2, OST48, OST4, DAD1 and TMEM258, either STT3A or STT3B as catalytic subunits, and form-specific accessory subunits. STT3A complex assembly occurs through the formation of 3 subcomplexes. Subcomplex 1 contains RPN1 and TMEM258, subcomplex 2 contains the STT3A-specific subunits STT3A, DC2/OSTC, and KCP2 as well as the core subunit OST4, and subcomplex 3 contains RPN2, DAD1, and OST48. The STT3A complex can form stable complexes with the Sec61 complex or with both the Sec61 and TRAP complexes.

The protein localises to the endoplasmic reticulum membrane. It functions in the pathway protein modification; protein glycosylation. Functionally, subunit of the oligosaccharyl transferase (OST) complex that catalyzes the initial transfer of a defined glycan (Glc(3)Man(9)GlcNAc(2) in eukaryotes) from the lipid carrier dolichol-pyrophosphate to an asparagine residue within an Asn-X-Ser/Thr consensus motif in nascent polypeptide chains, the first step in protein N-glycosylation. N-glycosylation occurs cotranslationally and the complex associates with the Sec61 complex at the channel-forming translocon complex that mediates protein translocation across the endoplasmic reticulum (ER). All subunits are required for a maximal enzyme activity. The chain is Dolichyl-diphosphooligosaccharide--protein glycosyltransferase subunit DAD1 from Sus scrofa (Pig).